The sequence spans 388 residues: Chorismate synthase (388 aa).

NADP(+) is bound by residues Arg-39 and Arg-45. Residues 130-132 (RSS), 251-252 (NA), Gly-296, 311-315 (KPIPT), and Arg-337 each bind FMN.

The protein belongs to the chorismate synthase family. In terms of assembly, homotetramer. FMNH2 serves as cofactor.

The enzyme catalyses 5-O-(1-carboxyvinyl)-3-phosphoshikimate = chorismate + phosphate. The protein operates within metabolic intermediate biosynthesis; chorismate biosynthesis; chorismate from D-erythrose 4-phosphate and phosphoenolpyruvate: step 7/7. In terms of biological role, catalyzes the anti-1,4-elimination of the C-3 phosphate and the C-6 proR hydrogen from 5-enolpyruvylshikimate-3-phosphate (EPSP) to yield chorismate, which is the branch point compound that serves as the starting substrate for the three terminal pathways of aromatic amino acid biosynthesis. This reaction introduces a second double bond into the aromatic ring system. This Streptococcus pneumoniae serotype 19F (strain G54) protein is Chorismate synthase.